The primary structure comprises 158 residues: Cyclic pyranopterin monophosphate synthase (158 aa).

Residues 74 to 76 (MCH) and 112 to 113 (ME) contribute to the substrate site. Asp-127 is a catalytic residue.

The protein belongs to the MoaC family. As to quaternary structure, homohexamer; trimer of dimers.

The catalysed reaction is (8S)-3',8-cyclo-7,8-dihydroguanosine 5'-triphosphate = cyclic pyranopterin phosphate + diphosphate. Its pathway is cofactor biosynthesis; molybdopterin biosynthesis. Its function is as follows. Catalyzes the conversion of (8S)-3',8-cyclo-7,8-dihydroguanosine 5'-triphosphate to cyclic pyranopterin monophosphate (cPMP). The polypeptide is Cyclic pyranopterin monophosphate synthase (Helicobacter pylori (strain J99 / ATCC 700824) (Campylobacter pylori J99)).